A 347-amino-acid polypeptide reads, in one-letter code: MYTLARQLLFKLSPETAHELTIDLLGAGGRLGLNGLLCHRPASLPVRVMGLDFPNPVGLAAGLDKNGDAIDGLAQLGFGFVEIGTVTPRPQPGNPRPRLFRLPQAEAIVNRMGFNNLGVDHLLARVQAARYSGVLGINIGKNFDTPVERAVDDYLICLDKVYPHASYVTVNVSSPNTPGLRSLQFGDSLRQLLEALRQRQEELAGRHGRRVPLAIKIAPDMSDEETAQVARALLDTGMDAVIATNTTLGREGVEGLAHAGEAGGLSGAPVREKSTHAVRVLAGELGGRLPIVAVGGITEGRHAAEKIAAGASLVQIYTGFVYKGPALIREAVEAIAALRGERPVGTH.

FMN-binding positions include 61–65 (AGLDK) and Thr85. Lys65 contributes to the substrate binding site. 110-114 (NRMGF) contributes to the substrate binding site. Residues Asn138 and Asn171 each contribute to the FMN site. Asn171 contributes to the substrate binding site. Residue Ser174 is the Nucleophile of the active site. Asn176 contacts substrate. Lys216 and Thr244 together coordinate FMN. 245-246 (NT) contacts substrate. FMN is bound by residues Gly267, Gly296, and 317–318 (YT).

The protein belongs to the dihydroorotate dehydrogenase family. Type 2 subfamily. Monomer. The cofactor is FMN.

The protein localises to the cell membrane. The catalysed reaction is (S)-dihydroorotate + a quinone = orotate + a quinol. It participates in pyrimidine metabolism; UMP biosynthesis via de novo pathway; orotate from (S)-dihydroorotate (quinone route): step 1/1. In terms of biological role, catalyzes the conversion of dihydroorotate to orotate with quinone as electron acceptor. The polypeptide is Dihydroorotate dehydrogenase (quinone) (Azotobacter vinelandii (strain DJ / ATCC BAA-1303)).